Reading from the N-terminus, the 487-residue chain is Aspartyl/glutamyl-tRNA(Asn/Gln) amidotransferase subunit B (487 aa).

It belongs to the GatB/GatE family. GatB subfamily. As to quaternary structure, heterotrimer of A, B and C subunits.

It carries out the reaction L-glutamyl-tRNA(Gln) + L-glutamine + ATP + H2O = L-glutaminyl-tRNA(Gln) + L-glutamate + ADP + phosphate + H(+). It catalyses the reaction L-aspartyl-tRNA(Asn) + L-glutamine + ATP + H2O = L-asparaginyl-tRNA(Asn) + L-glutamate + ADP + phosphate + 2 H(+). In terms of biological role, allows the formation of correctly charged Asn-tRNA(Asn) or Gln-tRNA(Gln) through the transamidation of misacylated Asp-tRNA(Asn) or Glu-tRNA(Gln) in organisms which lack either or both of asparaginyl-tRNA or glutaminyl-tRNA synthetases. The reaction takes place in the presence of glutamine and ATP through an activated phospho-Asp-tRNA(Asn) or phospho-Glu-tRNA(Gln). The sequence is that of Aspartyl/glutamyl-tRNA(Asn/Gln) amidotransferase subunit B from Chlamydia abortus (strain DSM 27085 / S26/3) (Chlamydophila abortus).